We begin with the raw amino-acid sequence, 65 residues long: MRTFLFLFAVLFFLTPAKNEFFDEKCGKLKGTCKNNCGKNEELIALCQKSLKCCRTIQPCGSIID.

The first 20 residues, 1–20 (MRTFLFLFAVLFFLTPAKNE), serve as a signal peptide directing secretion. 3 disulfides stabilise this stretch: Cys26–Cys53, Cys33–Cys47, and Cys37–Cys54.

Belongs to the beta-defensin family. Monomer. Interacts with CCR2 (via extracellular N-terminal region); this interaction may preferentially require specific tyrosine sulfation on CCR2.

Its subcellular location is the secreted. The protein resides in the membrane. Has antibacterial activity. Acts as a ligand for C-C chemokine receptor CCR2. In Pongo pygmaeus (Bornean orangutan), this protein is Beta-defensin 106A (DEFB106A).